The sequence spans 514 residues: Beta-glucosidase 16 (514 aa).

The first 21 residues, 1 to 21 (MRGKFLSLLLLITLACIGVSA), serve as a signal peptide directing secretion. Q49 provides a ligand contact to a beta-D-glucoside. N-linked (GlcNAc...) asparagine glycosylation is present at N80. Residues H153 and 198–199 (NE) contribute to the a beta-D-glucoside site. The active-site Proton donor is E199. Cysteines 218 and 226 form a disulfide. Y343 is a binding site for a beta-D-glucoside. The N-linked (GlcNAc...) asparagine glycan is linked to N357. A beta-D-glucoside-binding positions include E413, W458, 465-466 (EW), and F474. E413 (nucleophile) is an active-site residue.

It belongs to the glycosyl hydrolase 1 family. In terms of tissue distribution, expressed at low levels in cauline leaves and flowers.

It catalyses the reaction Hydrolysis of terminal, non-reducing beta-D-glucosyl residues with release of beta-D-glucose.. The chain is Beta-glucosidase 16 from Arabidopsis thaliana (Mouse-ear cress).